Here is a 51-residue protein sequence, read N- to C-terminus: MPSHKSFMIKKKLGKKMRQNRPIPHWIRLRTDNTIRYNAKRRHWRRTKLGF.

Positions 1-21 (MPSHKSFMIKKKLGKKMRQNR) are disordered. Over residues 7–19 (FMIKKKLGKKMRQ) the composition is skewed to basic residues.

It belongs to the eukaryotic ribosomal protein eL39 family.

The chain is Large ribosomal subunit protein eL39z/eL39x (RPL39A) from Arabidopsis thaliana (Mouse-ear cress).